The sequence spans 83 residues: Weak toxin DE-1 (83 aa).

The N-terminal stretch at 1-21 is a signal peptide; it reads MKTLLLTLVVVTIVCLDLGYS. Cystine bridges form between C24-C45, C38-C62, C64-C75, and C76-C81.

This sequence belongs to the three-finger toxin family. Short-chain subfamily. Type I alpha-neurotoxin sub-subfamily. As to expression, expressed by the venom gland.

It localises to the secreted. The polypeptide is Weak toxin DE-1 (Ophiophagus hannah (King cobra)).